The primary structure comprises 249 residues: Esterase YjfP (249 aa).

Displays esterase activity toward palmitoyl-CoA and pNP-butyrate. This is Esterase YjfP (yjfP) from Escherichia coli (strain K12).